The sequence spans 339 residues: Ketol-acid reductoisomerase (NADP(+)) (339 aa).

The 182-residue stretch at 1 to 182 (MRVYYDRDAD…GGGRAGIIET (182 aa)) folds into the KARI N-terminal Rossmann domain. Residues 24-27 (YGSQ), arginine 48, serine 51, threonine 53, and 83-86 (DELQ) each bind NADP(+). Residue histidine 108 is part of the active site. Glycine 134 is an NADP(+) binding site. In terms of domain architecture, KARI C-terminal knotted spans 183–328 (SFKEECETDL…AKLREMMPWI (146 aa)). Residues aspartate 191, glutamate 195, glutamate 227, and glutamate 231 each coordinate Mg(2+). Serine 252 is a substrate binding site.

Belongs to the ketol-acid reductoisomerase family. Mg(2+) serves as cofactor.

The enzyme catalyses (2R)-2,3-dihydroxy-3-methylbutanoate + NADP(+) = (2S)-2-acetolactate + NADPH + H(+). The catalysed reaction is (2R,3R)-2,3-dihydroxy-3-methylpentanoate + NADP(+) = (S)-2-ethyl-2-hydroxy-3-oxobutanoate + NADPH + H(+). The protein operates within amino-acid biosynthesis; L-isoleucine biosynthesis; L-isoleucine from 2-oxobutanoate: step 2/4. Its pathway is amino-acid biosynthesis; L-valine biosynthesis; L-valine from pyruvate: step 2/4. Involved in the biosynthesis of branched-chain amino acids (BCAA). Catalyzes an alkyl-migration followed by a ketol-acid reduction of (S)-2-acetolactate (S2AL) to yield (R)-2,3-dihydroxy-isovalerate. In the isomerase reaction, S2AL is rearranged via a Mg-dependent methyl migration to produce 3-hydroxy-3-methyl-2-ketobutyrate (HMKB). In the reductase reaction, this 2-ketoacid undergoes a metal-dependent reduction by NADPH to yield (R)-2,3-dihydroxy-isovalerate. The protein is Ketol-acid reductoisomerase (NADP(+)) of Rhodopseudomonas palustris (strain BisB5).